We begin with the raw amino-acid sequence, 326 residues long: Olfactory receptor 10X1 (326 aa).

The Extracellular portion of the chain corresponds to 1–41; it reads MVLNVYCCFFQISDIQTMKINQTILKEFILVGFSVYPHVQT. N-linked (GlcNAc...) asparagine glycosylation is present at asparagine 21. Residues 42 to 62 traverse the membrane as a helical segment; the sequence is FLFVVFFCLYLLTLAGNLIIM. At 63-70 the chain is on the cytoplasmic side; that stretch reads GLTWVDRS. Residues 71–91 traverse the membrane as a helical segment; that stretch reads LHTPMYLFLSALSFSETCYTL. Topologically, residues 92–115 are extracellular; that stretch reads TIVPKMLEDLLAKDRSISVTGCSL. A disulfide bridge links cysteine 113 with cysteine 205. A helical transmembrane segment spans residues 116 to 136; the sequence is QMCFFLGLGGTNCIILTLMGY. The Cytoplasmic portion of the chain corresponds to 137-155; the sequence is DRFLAICNPLRYPLLMTNI. The helical transmembrane segment at 156 to 176 threads the bilayer; it reads VCGQLVASACTAGFFISLTET. Over 177-213 the chain is Extracellular; sequence ALIFRDSFCRPNLVKHFFCHMLAVIRLSCIDSNHTEF. Residue asparagine 209 is glycosylated (N-linked (GlcNAc...) asparagine). The helical transmembrane segment at 214-233 threads the bilayer; the sequence is IITLISVSGLLGTLLLIILT. Over 234 to 253 the chain is Cytoplasmic; it reads DVFIISTVLRIPSAEGKQKA. Residues 254–274 traverse the membrane as a helical segment; sequence FTTCASHLTVVIIHFGFASIV. Over 275 to 284 the chain is Extracellular; the sequence is YLKPEASGDD. The helical transmembrane segment at 285–305 threads the bilayer; that stretch reads TLIAVPYTVITPFLSPIIFSL. Residues 306–326 lie on the Cytoplasmic side of the membrane; that stretch reads RNKDMKNAFRRMMGNTVALKK.

The protein belongs to the G-protein coupled receptor 1 family.

It localises to the cell membrane. Its function is as follows. Odorant receptor. This chain is Olfactory receptor 10X1 (OR10X1), found in Homo sapiens (Human).